We begin with the raw amino-acid sequence, 511 residues long: Histidine ammonia-lyase (511 aa).

The 5-imidazolinone (Ala-Gly) cross-link spans 142–144 (ASG). Ser-143 carries the post-translational modification 2,3-didehydroalanine (Ser).

The protein belongs to the PAL/histidase family. Contains an active site 4-methylidene-imidazol-5-one (MIO), which is formed autocatalytically by cyclization and dehydration of residues Ala-Ser-Gly.

Its subcellular location is the cytoplasm. It catalyses the reaction L-histidine = trans-urocanate + NH4(+). It participates in amino-acid degradation; L-histidine degradation into L-glutamate; N-formimidoyl-L-glutamate from L-histidine: step 1/3. This chain is Histidine ammonia-lyase, found in Brucella anthropi (strain ATCC 49188 / DSM 6882 / CCUG 24695 / JCM 21032 / LMG 3331 / NBRC 15819 / NCTC 12168 / Alc 37) (Ochrobactrum anthropi).